The primary structure comprises 70 residues: Small ribosomal subunit protein bS21 (70 aa).

Belongs to the bacterial ribosomal protein bS21 family.

In Polynucleobacter asymbioticus (strain DSM 18221 / CIP 109841 / QLW-P1DMWA-1) (Polynucleobacter necessarius subsp. asymbioticus), this protein is Small ribosomal subunit protein bS21.